Consider the following 64-residue polypeptide: Large ribosomal subunit protein bL35 (64 aa).

The disordered stretch occupies residues 1 to 28 (MPKMKTHSGAKKRFKLTGSGKLKRQQAN).

It belongs to the bacterial ribosomal protein bL35 family.

In Renibacterium salmoninarum (strain ATCC 33209 / DSM 20767 / JCM 11484 / NBRC 15589 / NCIMB 2235), this protein is Large ribosomal subunit protein bL35.